Reading from the N-terminus, the 481-residue chain is UDP-glycosyltransferase 71K2 (481 aa).

Residues serine 285, 350–351 (WA), 368–376 (HCGWNSILE), and 390–393 (YAEQ) each bind UDP-alpha-D-glucose.

The protein belongs to the UDP-glycosyltransferase family.

In terms of biological role, glycosyltransferase that possesses chalcone and flavonol 2'-O-glycosyltransferase activity. Converts phloretin to phlorizin (phloretin 2'-O-glucoside), a potent antioxidant. Possesses glycosyltransferase activity toward quercetin, isoliquiritigenin, butein and caffeic acid. This is UDP-glycosyltransferase 71K2 from Pyrus communis (Pear).